Here is a 384-residue protein sequence, read N- to C-terminus: tRNA-specific 2-thiouridylase MnmA (384 aa).

ATP is bound by residues 9-16 (GMSGGVDS) and Met-35. The interval 95 to 97 (NPD) is interaction with target base in tRNA. Cys-100 (nucleophile) is an active-site residue. Cys-100 and Cys-196 form a disulfide bridge. Residue Gly-124 participates in ATP binding. The tract at residues 146-148 (KDQ) is interaction with tRNA. Catalysis depends on Cys-196, which acts as the Cysteine persulfide intermediate. Residues 308-309 (RY) are interaction with tRNA.

This sequence belongs to the MnmA/TRMU family.

The protein localises to the cytoplasm. The enzyme catalyses S-sulfanyl-L-cysteinyl-[protein] + uridine(34) in tRNA + AH2 + ATP = 2-thiouridine(34) in tRNA + L-cysteinyl-[protein] + A + AMP + diphosphate + H(+). Its function is as follows. Catalyzes the 2-thiolation of uridine at the wobble position (U34) of tRNA, leading to the formation of s(2)U34. The chain is tRNA-specific 2-thiouridylase MnmA from Burkholderia ambifaria (strain ATCC BAA-244 / DSM 16087 / CCUG 44356 / LMG 19182 / AMMD) (Burkholderia cepacia (strain AMMD)).